The sequence spans 468 residues: Cysteine--tRNA ligase (468 aa).

C33 provides a ligand contact to Zn(2+). The short motif at 35–45 is the 'HIGH' region element; the sequence is ATVQGLPHIGH. C211, H236, and E240 together coordinate Zn(2+). The 'KMSKS' region signature appears at 267 to 271; that stretch reads KMSKS. Position 270 (K270) interacts with ATP.

It belongs to the class-I aminoacyl-tRNA synthetase family. As to quaternary structure, monomer. It depends on Zn(2+) as a cofactor.

It localises to the cytoplasm. It carries out the reaction tRNA(Cys) + L-cysteine + ATP = L-cysteinyl-tRNA(Cys) + AMP + diphosphate. The polypeptide is Cysteine--tRNA ligase (Mycobacterium avium (strain 104)).